The sequence spans 962 residues: Protein suppressor of underreplication (962 aa).

Disordered stretches follow at residues 353-413 (EIVT…TRAA), 438-590 (TPTP…LSGS), 658-712 (NSSH…SPDL), 866-900 (QERT…TQAT), and 916-962 (QTSS…ELFK). Over residues 372–382 (PRTKSKKKCSK) the composition is skewed to basic residues. Positions 386–395 (PCKEADLTDS) are enriched in basic and acidic residues. Polar residues-rich tracts occupy residues 438–448 (TPTPSGATTAI) and 480–489 (LTRSAESKIN). Residues 524-552 (VKQESKAKAKPEQKKKIKTVDKPAQETPK) are compositionally biased toward basic and acidic residues. The segment covering 553 to 562 (RKPGRPRKCK) has biased composition (basic residues). Over residues 564 to 576 (LTETLGKSKTKPN) the composition is skewed to polar residues. Basic residues predominate over residues 673-683 (RRTKALKRKRK). Polar residues-rich tracts occupy residues 703–712 (RSATNKSPDL) and 866–880 (QERT…NSIV). Residues 885–894 (KSPKSPKHGA) show a composition bias toward basic residues. The span at 916-944 (QTSSVESVSAPSTPVNPSTSAAACQTRTA) shows a compositional bias: polar residues. Residues 953-962 (TKRKRLELFK) are compositionally biased toward basic residues.

The protein resides in the nucleus. It is found in the chromosome. Functionally, required for underreplication of DNA, which is found in many late replicating euchromatic regions of salivary gland polytene chromosomes. Controls chromatin organization in polytene chromosomes. The sequence is that of Protein suppressor of underreplication (SuUR) from Drosophila erecta (Fruit fly).